Reading from the N-terminus, the 421-residue chain is UPF0300 protein C737.04 (421 aa).

It belongs to the UPF0300 family.

It localises to the cytoplasm. In Schizosaccharomyces pombe (strain 972 / ATCC 24843) (Fission yeast), this protein is UPF0300 protein C737.04.